The following is a 105-amino-acid chain: Pyruvate synthase subunit PorD (105 aa).

4Fe-4S ferredoxin-type domains lie at 44–73 and 74–103; these read FKPE…LDEE and GYPV…MVRE. [4Fe-4S] cluster is bound by residues C53, C56, C59, C63, C83, C86, C89, and C93.

In terms of assembly, heterotetramer of one alpha, one beta, one delta and one gamma chain. It depends on [4Fe-4S] cluster as a cofactor.

In Pyrococcus horikoshii (strain ATCC 700860 / DSM 12428 / JCM 9974 / NBRC 100139 / OT-3), this protein is Pyruvate synthase subunit PorD (porD).